The primary structure comprises 136 residues: Nucleoside diphosphate kinase (136 aa).

Residues Lys10, Phe58, Arg86, Thr92, Arg104, and Asn114 each contribute to the ATP site. Catalysis depends on His117, which acts as the Pros-phosphohistidine intermediate.

Belongs to the NDK family. Homotetramer. Requires Mg(2+) as cofactor.

The protein localises to the cytoplasm. It catalyses the reaction a 2'-deoxyribonucleoside 5'-diphosphate + ATP = a 2'-deoxyribonucleoside 5'-triphosphate + ADP. It carries out the reaction a ribonucleoside 5'-diphosphate + ATP = a ribonucleoside 5'-triphosphate + ADP. Major role in the synthesis of nucleoside triphosphates other than ATP. The ATP gamma phosphate is transferred to the NDP beta phosphate via a ping-pong mechanism, using a phosphorylated active-site intermediate. This is Nucleoside diphosphate kinase from Mycobacterium ulcerans (strain Agy99).